The chain runs to 196 residues: Ras-related protein RabC (196 aa).

Residue 13 to 20 (GESGVGKS) coordinates GTP. The Effector region signature appears at 35–43 (FAPTLGVDF). GTP contacts are provided by residues 63–67 (DTAGQ) and 121–124 (NKSD). Residues Cys195 and Cys196 are each lipidated (S-geranylgeranyl cysteine).

Belongs to the small GTPase superfamily. Rab family.

Its subcellular location is the cell membrane. The chain is Ras-related protein RabC (rabC) from Dictyostelium discoideum (Social amoeba).